A 305-amino-acid polypeptide reads, in one-letter code: Pseudouridine-5'-phosphate glycosidase (305 aa).

The Proton donor role is filled by Glu22. Residues Lys84 and Val104 each coordinate substrate. Asp136 provides a ligand contact to Mn(2+). A substrate-binding site is contributed by 138–140; it reads SAD. The active-site Nucleophile is Lys157.

Belongs to the pseudouridine-5'-phosphate glycosidase family. Homotrimer. The cofactor is Mn(2+).

It carries out the reaction D-ribose 5-phosphate + uracil = psi-UMP + H2O. Its function is as follows. Catalyzes the reversible cleavage of pseudouridine 5'-phosphate (PsiMP) to ribose 5-phosphate and uracil. Functions biologically in the cleavage direction, as part of a pseudouridine degradation pathway. The protein is Pseudouridine-5'-phosphate glycosidase of Chloroflexus aurantiacus (strain ATCC 29364 / DSM 637 / Y-400-fl).